Here is a 476-residue protein sequence, read N- to C-terminus: MKVTLPEFERAGVMVVGDVMLDRYWYGPTSRISPEAPVPVVKVDTIEERPGGAANVAMNIASLGAHSRLVGLTGIDDAARALSKTLADVNVKCDFVSVPTHPTITKLRVLSRNQQLIRLDFEEGFEGVDPEPMHERIAQALGSIGALVLSDYAKGALASVQQMIQLARKAGVPVLIDPKGTEFERYRGATLLTPNLSEFEAVAGKCKNEEEIVERGMKIIADFDFSALLVTRSEQGMTLLQPGKPPLHMPTQAQEVYDVTGAGDTVIGVLAATLAAGNSLEEACYFANAAAGVVVGKLGTSTVSPIELENAVRGRADTGFGVMREDELKVAVAAARKRGEKVVMTNGVFDILHAGHVSYLANARKLGDRLIVAVNSDASTKRLKGETRPVNPLEQRMIVLGALEAVDWVVSFEEDTPQRLIAGILPDLLVKGGDYKPEQIAGSEEVWANGGDVMVLNFEDGCSTTNIIKKIQKDSQ.

A ribokinase region spans residues 1 to 318 (MKVTLPEFER…ENAVRGRADT (318 aa)). 195–198 (NLSE) contacts ATP. The active site involves Asp264. Residues 344 to 476 (MTNGVFDILH…IIKKIQKDSQ (133 aa)) form a cytidylyltransferase region.

The protein in the N-terminal section; belongs to the carbohydrate kinase PfkB family. In the C-terminal section; belongs to the cytidylyltransferase family. In terms of assembly, homodimer.

It catalyses the reaction D-glycero-beta-D-manno-heptose 7-phosphate + ATP = D-glycero-beta-D-manno-heptose 1,7-bisphosphate + ADP + H(+). It carries out the reaction D-glycero-beta-D-manno-heptose 1-phosphate + ATP + H(+) = ADP-D-glycero-beta-D-manno-heptose + diphosphate. It participates in nucleotide-sugar biosynthesis; ADP-L-glycero-beta-D-manno-heptose biosynthesis; ADP-L-glycero-beta-D-manno-heptose from D-glycero-beta-D-manno-heptose 7-phosphate: step 1/4. The protein operates within nucleotide-sugar biosynthesis; ADP-L-glycero-beta-D-manno-heptose biosynthesis; ADP-L-glycero-beta-D-manno-heptose from D-glycero-beta-D-manno-heptose 7-phosphate: step 3/4. In terms of biological role, catalyzes the phosphorylation of D-glycero-D-manno-heptose 7-phosphate at the C-1 position to selectively form D-glycero-beta-D-manno-heptose-1,7-bisphosphate. Functionally, catalyzes the ADP transfer from ATP to D-glycero-beta-D-manno-heptose 1-phosphate, yielding ADP-D-glycero-beta-D-manno-heptose. The chain is Bifunctional protein HldE from Enterobacter sp. (strain 638).